The sequence spans 322 residues: Sideroflexin-1 (322 aa).

Serine 2 is modified (N-acetylserine). Topologically, residues 2-102 (SGELPPNINI…MSAQVPMNMT (101 aa)) are mitochondrial matrix. Residues 103-120 (ITGCMMTFYRTTPAVLFW) form a helical membrane-spanning segment. Residues 121 to 146 (QWINQSFNAVVNYTNRSGDAPLTVNE) are Mitochondrial intermembrane-facing. The helical transmembrane segment at 147-167 (LGTAYVSATTGAVATALGLNA) threads the bilayer. Residues 168 to 174 (LTKHVSP) lie on the Mitochondrial matrix side of the membrane. Residues 175-195 (LIGRFVPFAAVAAANCINIPL) traverse the membrane as a helical segment. Over 196-228 (MRQRELKVGIPVTDENGNRLGESANAAKQAITQ) the chain is Mitochondrial intermembrane. Residues 229-249 (VVVSRILMAAPGMAIPPFIMN) traverse the membrane as a helical segment. Residues 250 to 266 (TLEKKAFLKRFPWMSAP) are Mitochondrial matrix-facing. A helical transmembrane segment spans residues 267 to 287 (IQVGLVGFCLVFATPLCCALF). At 288–322 (PQKSSMSVTSLEAELQAKIQESHPELRRVYFNKGL) the chain is on the mitochondrial intermembrane side.

This sequence belongs to the sideroflexin family. In terms of tissue distribution, highly expressed in tissues with high one-carbon metabolism activity, such as blood, liver and kidney.

It localises to the mitochondrion inner membrane. The enzyme catalyses L-serine(in) = L-serine(out). It catalyses the reaction L-alanine(in) = L-alanine(out). The catalysed reaction is L-cysteine(in) = L-cysteine(out). Amino acid transporter importing serine, an essential substrate of the mitochondrial branch of the one-carbon pathway, into mitochondria. Mitochondrial serine is then converted to glycine and formate, which exits to the cytosol where it is used to generate the charged folates that serve as one-carbon donors. May also transport other amino acids including alanine and cysteine. The chain is Sideroflexin-1 from Homo sapiens (Human).